The following is a 258-amino-acid chain: Indole-3-glycerol phosphate synthase 2 (258 aa).

This sequence belongs to the TrpC family.

It catalyses the reaction 1-(2-carboxyphenylamino)-1-deoxy-D-ribulose 5-phosphate + H(+) = (1S,2R)-1-C-(indol-3-yl)glycerol 3-phosphate + CO2 + H2O. It participates in amino-acid biosynthesis; L-tryptophan biosynthesis; L-tryptophan from chorismate: step 4/5. The function of the second trp operon in S.coelicolor is to produce tryptophan for the biosynthesis of calcium-dependent antibiotic (CDA). The polypeptide is Indole-3-glycerol phosphate synthase 2 (trpC2) (Streptomyces coelicolor (strain ATCC BAA-471 / A3(2) / M145)).